The sequence spans 237 residues: Ribosomal RNA small subunit methyltransferase G (237 aa).

S-adenosyl-L-methionine contacts are provided by residues Gly78, Phe83, 129–130 (AE), and Arg148.

Belongs to the methyltransferase superfamily. RNA methyltransferase RsmG family.

The protein localises to the cytoplasm. Its function is as follows. Specifically methylates the N7 position of a guanine in 16S rRNA. This Streptococcus pyogenes serotype M49 (strain NZ131) protein is Ribosomal RNA small subunit methyltransferase G.